Consider the following 443-residue polypeptide: Chromosomal replication initiator protein DnaA (443 aa).

A domain I, interacts with DnaA modulators region spans residues 1 to 67 (MDAWSRSLER…RELLAHFAGF (67 aa)). The domain II stretch occupies residues 67-105 (FSDVFLEIGSRPRPVEAQNAPFSTPSAHVSSEPQVPFAG). The segment at 106-323 (NLDNHYTFAN…GALNTLTARA (218 aa)) is domain III, AAA+ region. The ATP site is built by glycine 151, glycine 153, lysine 154, and threonine 155. A domain IV, binds dsDNA region spans residues 324–443 (NFTGRAITTE…WDKLIRKLSE (120 aa)).

It belongs to the DnaA family. In terms of assembly, oligomerizes as a right-handed, spiral filament on DNA at oriC.

The protein resides in the cytoplasm. In terms of biological role, plays an essential role in the initiation and regulation of chromosomal replication. ATP-DnaA binds to the origin of replication (oriC) to initiate formation of the DNA replication initiation complex once per cell cycle. Binds the DnaA box (a 9 base pair repeat at the origin) and separates the double-stranded (ds)DNA. Forms a right-handed helical filament on oriC DNA; dsDNA binds to the exterior of the filament while single-stranded (ss)DNA is stabiized in the filament's interior. The ATP-DnaA-oriC complex binds and stabilizes one strand of the AT-rich DNA unwinding element (DUE), permitting loading of DNA polymerase. After initiation quickly degrades to an ADP-DnaA complex that is not apt for DNA replication. Binds acidic phospholipids. This chain is Chromosomal replication initiator protein DnaA, found in Stenotrophomonas maltophilia (strain R551-3).